The sequence spans 351 residues: Phosphoribosylformylglycinamidine cyclo-ligase (351 aa).

Belongs to the AIR synthase family.

The protein resides in the cytoplasm. The catalysed reaction is 2-formamido-N(1)-(5-O-phospho-beta-D-ribosyl)acetamidine + ATP = 5-amino-1-(5-phospho-beta-D-ribosyl)imidazole + ADP + phosphate + H(+). Its pathway is purine metabolism; IMP biosynthesis via de novo pathway; 5-amino-1-(5-phospho-D-ribosyl)imidazole from N(2)-formyl-N(1)-(5-phospho-D-ribosyl)glycinamide: step 2/2. This is Phosphoribosylformylglycinamidine cyclo-ligase from Burkholderia ambifaria (strain MC40-6).